Reading from the N-terminus, the 381-residue chain is 1-deoxy-D-xylulose 5-phosphate reductoisomerase (381 aa).

T10, G11, S12, I13, G36, K37, N38, and N120 together coordinate NADPH. K121 is a binding site for 1-deoxy-D-xylulose 5-phosphate. E122 provides a ligand contact to NADPH. D146 contributes to the Mn(2+) binding site. 1-deoxy-D-xylulose 5-phosphate is bound by residues S147, E148, S172, and H195. E148 serves as a coordination point for Mn(2+). NADPH is bound at residue G201. 1-deoxy-D-xylulose 5-phosphate contacts are provided by S208, N213, K214, and E217. E217 is a binding site for Mn(2+).

The protein belongs to the DXR family. Requires Mg(2+) as cofactor. It depends on Mn(2+) as a cofactor.

The enzyme catalyses 2-C-methyl-D-erythritol 4-phosphate + NADP(+) = 1-deoxy-D-xylulose 5-phosphate + NADPH + H(+). It functions in the pathway isoprenoid biosynthesis; isopentenyl diphosphate biosynthesis via DXP pathway; isopentenyl diphosphate from 1-deoxy-D-xylulose 5-phosphate: step 1/6. In terms of biological role, catalyzes the NADPH-dependent rearrangement and reduction of 1-deoxy-D-xylulose-5-phosphate (DXP) to 2-C-methyl-D-erythritol 4-phosphate (MEP). This chain is 1-deoxy-D-xylulose 5-phosphate reductoisomerase, found in Lysinibacillus sphaericus (strain C3-41).